The sequence spans 415 residues: uncharacterized protein (415 aa).

[4Fe-4S] cluster contacts are provided by C85, C91, C94, and C175. S-adenosyl-L-methionine contacts are provided by Q248, Y276, E297, and N344. The Nucleophile role is filled by C371.

Belongs to the class I-like SAM-binding methyltransferase superfamily. RNA M5U methyltransferase family.

This is an uncharacterized protein from Leptospira interrogans serogroup Icterohaemorrhagiae serovar Lai (strain 56601).